The sequence spans 536 residues: Phosphoenolpyruvate carboxykinase (ATP) (536 aa).

Positions 61, 195, and 201 each coordinate substrate. Residues lysine 201, histidine 220, and 236 to 244 (GLSGTGKTT) contribute to the ATP site. Positions 201 and 220 each coordinate Mn(2+). Position 257 (aspartate 257) interacts with Mn(2+). Residues glutamate 285, arginine 322, and threonine 447 each contribute to the ATP site. Arginine 322 serves as a coordination point for substrate.

It belongs to the phosphoenolpyruvate carboxykinase (ATP) family. Mn(2+) serves as cofactor.

It localises to the cytoplasm. It carries out the reaction oxaloacetate + ATP = phosphoenolpyruvate + ADP + CO2. It functions in the pathway carbohydrate biosynthesis; gluconeogenesis. Functionally, involved in the gluconeogenesis. Catalyzes the conversion of oxaloacetate (OAA) to phosphoenolpyruvate (PEP) through direct phosphoryl transfer between the nucleoside triphosphate and OAA. The chain is Phosphoenolpyruvate carboxykinase (ATP) from Rhizobium meliloti (strain 1021) (Ensifer meliloti).